The primary structure comprises 1320 residues: Protein brunelleschi (1320 aa).

The segment at 313–411 is disordered; that stretch reads HRNSSLQEAG…IPGHQRNGDL (99 aa). Residues 314–327 are compositionally biased toward polar residues; it reads RNSSLQEAGTSPLK. At serine 317 the chain carries Phosphoserine. Threonine 329 carries the post-translational modification Phosphothreonine. Basic and acidic residues predominate over residues 329–340; the sequence is TPEKWRASDATK. The segment covering 345–361 has biased composition (polar residues); the sequence is SDATANNVDSNQPQQRV. The span at 362 to 400 shows a compositional bias: low complexity; the sequence is TSNSSSCSSVSSLVTTATNSSASDTPTTSSSSTSTISAA. Phosphoserine is present on serine 672. The interval 923 to 954 is disordered; sequence VSTSGHASLPSRVGSPHHRRNEPQNSSFRSTI. Residues 945 to 954 are compositionally biased toward polar residues; sequence PQNSSFRSTI.

The protein belongs to the NIBP family. May be part of the multisubunit TRAPP (transport protein particle) complex.

It localises to the cytoplasm. The protein localises to the golgi apparatus. Functionally, cooperates with Rab11 and fwd/PI4K to mediate the flow of membrane through the Golgi, which is required to support cleavage furrow ingression, therefore promoting cytokinesis in male meiotic cells. The chain is Protein brunelleschi from Drosophila melanogaster (Fruit fly).